The primary structure comprises 311 residues: Protoheme IX farnesyltransferase (311 aa).

The next 9 helical transmembrane spans lie at 38–58 (IKVVALLVLTALVGLALAPDM), 62–82 (YFVQLLSLFGIGLLSSSAAVI), 113–133 (LIFSAVIGTLGFSLLVFAANW), 134–154 (LTAQMTLFALVGYAFVYTMFL), 162–182 (IVIGGLAGAMPPLLGWISETG), 188–208 (PWILVMIIFTWTPPHFWALAI), 230–250 (FTKTCILLYSLLLTVVCFLPF), 251–271 (LIHMSGYLYLFVAMLINIIFI), and 286–306 (ALNLFKYSILHLTLLFIALFA).

Belongs to the UbiA prenyltransferase family. Protoheme IX farnesyltransferase subfamily.

The protein localises to the cell inner membrane. The enzyme catalyses heme b + (2E,6E)-farnesyl diphosphate + H2O = Fe(II)-heme o + diphosphate. The protein operates within porphyrin-containing compound metabolism; heme O biosynthesis; heme O from protoheme: step 1/1. Its function is as follows. Converts heme B (protoheme IX) to heme O by substitution of the vinyl group on carbon 2 of heme B porphyrin ring with a hydroxyethyl farnesyl side group. This chain is Protoheme IX farnesyltransferase, found in Psychromonas ingrahamii (strain DSM 17664 / CCUG 51855 / 37).